The chain runs to 467 residues: uncharacterized protein (467 aa).

The interval 416–467 is disordered; sequence KQQRAQTAVVGTTKELVSKATHMKPPRTPPGEAEHRKRSQSLAICQWNKNSR. A compositionally biased stretch (polar residues) spans 455–467; sequence QSLAICQWNKNSR.

This is an uncharacterized protein from Homo sapiens (Human).